The following is a 726-amino-acid chain: Cyclic nucleotide-gated ion channel 2 (726 aa).

Residues 1–127 (MPSHPNFIFR…SKRVQRWNRA (127 aa)) lie on the Cytoplasmic side of the membrane. The tract at residues 26–46 (IDENSNLQINGGDSSSSGSDE) is disordered. Positions 36–45 (GGDSSSSGSD) are enriched in low complexity. The chain crosses the membrane as a helical span at residues 128-148 (LLLARGMALAVDPLFFYALSI). Topologically, residues 149 to 162 (GRTTGPACLYMDGA) are extracellular. A helical transmembrane segment spans residues 163-183 (FAAVVTVLRTCLDAVHLWHVW). The Cytoplasmic segment spans residues 184 to 219 (LQFRLAYVSRESLVVGCGKLVWDPRAIASHYARSLT). A helical membrane pass occupies residues 220–240 (GFWFDVIVILPVPQAVFWLVV). Residues 241 to 254 (PKLIREEKVKLIMT) are Extracellular-facing. The helical transmembrane segment at 255 to 275 (ILLLIFLFQFLPKIYHCICLM) threads the bilayer. The Cytoplasmic segment spans residues 276 to 282 (RRMQKVT). A helical membrane pass occupies residues 283-303 (GYIFGTIWWGFALNLIAYFIA). At 304–424 (SHVAGGCWYV…ANDLEPTSNW (121 aa)) the chain is on the extracellular side. A helical transmembrane segment spans residues 425 to 445 (LEVIFSIVMVLSGLLLFTLLI). Over 446–726 (GNIQVFLHAV…MSIRPHDHLE (281 aa)) the chain is Cytoplasmic. Residues 531 to 661 (LFRG…ARYY) and aspartate 600 contribute to the a nucleoside 3',5'-cyclic phosphate site. Residues 645–661 (FRYKFANERLKRTARYY) form a calmodulin-binding region. The IQ domain maps to 666–695 (RTWAAVNIQMAWRRRRKRTRGENIGGSMSP).

This sequence belongs to the cyclic nucleotide-gated cation channel (TC 1.A.1.5) family. As to quaternary structure, homotetramer or heterotetramer (Potential). Binds calmodulin-1/4 with a higher affinity than calmodulin-2/3/5. In terms of tissue distribution, expressed in the whole plant but only weakly in roots. Strongly expressed in the expanded cotyledons of 14-day-old seedlings and detected later in leaves after the transition to flowering. Also detected in flowers during organ senescence and in the dehiscence zone of siliques.

Its subcellular location is the cell membrane. Functionally, acts as a cyclic nucleotide-gated ion channel. Permeable to potassium and calcium in a cyclic nucleotide-dependent fashion (cAMP or cGMP). Could also transport lithium, cesium and rubium and displays a strong selectivity against sodium. Seems to directly participate in pathogen-induced calcium influx. May function in homeostasis, re-establishing ionic balance after defense action and/or other stimuli. Could mediate the initiation of the developmentally regulated cell death programs. The sequence is that of Cyclic nucleotide-gated ion channel 2 (CNGC2) from Arabidopsis thaliana (Mouse-ear cress).